Reading from the N-terminus, the 394-residue chain is NAD(P)H-quinone oxidoreductase subunit H (394 aa).

This sequence belongs to the complex I 49 kDa subunit family. As to quaternary structure, NDH-1 can be composed of about 15 different subunits; different subcomplexes with different compositions have been identified which probably have different functions.

The protein resides in the cellular thylakoid membrane. It catalyses the reaction a plastoquinone + NADH + (n+1) H(+)(in) = a plastoquinol + NAD(+) + n H(+)(out). The catalysed reaction is a plastoquinone + NADPH + (n+1) H(+)(in) = a plastoquinol + NADP(+) + n H(+)(out). NDH-1 shuttles electrons from an unknown electron donor, via FMN and iron-sulfur (Fe-S) centers, to quinones in the respiratory and/or the photosynthetic chain. The immediate electron acceptor for the enzyme in this species is believed to be plastoquinone. Couples the redox reaction to proton translocation, and thus conserves the redox energy in a proton gradient. Cyanobacterial NDH-1 also plays a role in inorganic carbon-concentration. The protein is NAD(P)H-quinone oxidoreductase subunit H of Prochlorococcus marinus (strain NATL1A).